The primary structure comprises 420 residues: L-rhamnose isomerase (420 aa).

Mn(2+) is bound by residues His264, Asp296, and Asp298.

It belongs to the rhamnose isomerase family. Mn(2+) serves as cofactor.

The protein localises to the cytoplasm. The catalysed reaction is L-rhamnopyranose = L-rhamnulose. Its pathway is carbohydrate degradation; L-rhamnose degradation; glycerone phosphate from L-rhamnose: step 1/3. Functionally, catalyzes the interconversion of L-rhamnose and L-rhamnulose. This is L-rhamnose isomerase from Listeria monocytogenes serovar 1/2a (strain ATCC BAA-679 / EGD-e).